Here is a 314-residue protein sequence, read N- to C-terminus: Methionyl-tRNA formyltransferase (314 aa).

112–115 (SLLP) serves as a coordination point for (6S)-5,6,7,8-tetrahydrofolate.

Belongs to the Fmt family.

It carries out the reaction L-methionyl-tRNA(fMet) + (6R)-10-formyltetrahydrofolate = N-formyl-L-methionyl-tRNA(fMet) + (6S)-5,6,7,8-tetrahydrofolate + H(+). In terms of biological role, attaches a formyl group to the free amino group of methionyl-tRNA(fMet). The formyl group appears to play a dual role in the initiator identity of N-formylmethionyl-tRNA by promoting its recognition by IF2 and preventing the misappropriation of this tRNA by the elongation apparatus. This chain is Methionyl-tRNA formyltransferase, found in Legionella pneumophila (strain Corby).